The following is a 314-amino-acid chain: Ribonuclease Z (314 aa).

Positions 61, 63, 65, 66, 137, 207, and 263 each coordinate Zn(2+). Catalysis depends on Asp-65, which acts as the Proton acceptor.

It belongs to the RNase Z family. Homodimer. Requires Zn(2+) as cofactor.

It carries out the reaction Endonucleolytic cleavage of RNA, removing extra 3' nucleotides from tRNA precursor, generating 3' termini of tRNAs. A 3'-hydroxy group is left at the tRNA terminus and a 5'-phosphoryl group is left at the trailer molecule.. In terms of biological role, zinc phosphodiesterase, which displays some tRNA 3'-processing endonuclease activity. Probably involved in tRNA maturation, by removing a 3'-trailer from precursor tRNA. The sequence is that of Ribonuclease Z from Thermococcus kodakarensis (strain ATCC BAA-918 / JCM 12380 / KOD1) (Pyrococcus kodakaraensis (strain KOD1)).